We begin with the raw amino-acid sequence, 207 residues long: Ribonuclease HII (207 aa).

The RNase H type-2 domain maps to 12 to 201 (DLVAGVDEVG…VRAAWEAREG (190 aa)). The a divalent metal cation site is built by aspartate 18, glutamate 19, and aspartate 110.

The protein belongs to the RNase HII family. Mn(2+) is required as a cofactor. It depends on Mg(2+) as a cofactor.

It is found in the cytoplasm. It catalyses the reaction Endonucleolytic cleavage to 5'-phosphomonoester.. Functionally, endonuclease that specifically degrades the RNA of RNA-DNA hybrids. In Pseudomonas putida (strain GB-1), this protein is Ribonuclease HII.